Consider the following 482-residue polypeptide: Bifunctional protein GlmU (482 aa).

Residues 1–238 are pyrophosphorylase; that stretch reads MSAIRPAAVV…HREIAGINNR (238 aa). UDP-N-acetyl-alpha-D-glucosamine-binding positions include 12-15, K26, Q79, and 84-85; these read LAAG and GT. D110 provides a ligand contact to Mg(2+). G147, E163, N178, and N236 together coordinate UDP-N-acetyl-alpha-D-glucosamine. N236 is a Mg(2+) binding site. The segment at 239–259 is linker; it reads VQLAEARRILNDRLLTRAMLA. Residues 260-482 are N-acetyltransferase; that stretch reads GVTVVDPATT…VASRKPEGED (223 aa). Residues R341 and K359 each contribute to the UDP-N-acetyl-alpha-D-glucosamine site. The active-site Proton acceptor is the H371. The UDP-N-acetyl-alpha-D-glucosamine site is built by Y374 and N385. Acetyl-CoA-binding positions include A388, 394-395, S413, A431, and R448; that span reads NY.

The protein in the N-terminal section; belongs to the N-acetylglucosamine-1-phosphate uridyltransferase family. This sequence in the C-terminal section; belongs to the transferase hexapeptide repeat family. Homotrimer. It depends on Mg(2+) as a cofactor.

It is found in the cytoplasm. The enzyme catalyses alpha-D-glucosamine 1-phosphate + acetyl-CoA = N-acetyl-alpha-D-glucosamine 1-phosphate + CoA + H(+). It catalyses the reaction N-acetyl-alpha-D-glucosamine 1-phosphate + UTP + H(+) = UDP-N-acetyl-alpha-D-glucosamine + diphosphate. Its pathway is nucleotide-sugar biosynthesis; UDP-N-acetyl-alpha-D-glucosamine biosynthesis; N-acetyl-alpha-D-glucosamine 1-phosphate from alpha-D-glucosamine 6-phosphate (route II): step 2/2. It functions in the pathway nucleotide-sugar biosynthesis; UDP-N-acetyl-alpha-D-glucosamine biosynthesis; UDP-N-acetyl-alpha-D-glucosamine from N-acetyl-alpha-D-glucosamine 1-phosphate: step 1/1. The protein operates within bacterial outer membrane biogenesis; LPS lipid A biosynthesis. Catalyzes the last two sequential reactions in the de novo biosynthetic pathway for UDP-N-acetylglucosamine (UDP-GlcNAc). The C-terminal domain catalyzes the transfer of acetyl group from acetyl coenzyme A to glucosamine-1-phosphate (GlcN-1-P) to produce N-acetylglucosamine-1-phosphate (GlcNAc-1-P), which is converted into UDP-GlcNAc by the transfer of uridine 5-monophosphate (from uridine 5-triphosphate), a reaction catalyzed by the N-terminal domain. The polypeptide is Bifunctional protein GlmU (Streptomyces avermitilis (strain ATCC 31267 / DSM 46492 / JCM 5070 / NBRC 14893 / NCIMB 12804 / NRRL 8165 / MA-4680)).